The sequence spans 119 residues: Dihydroneopterin aldolase (119 aa).

Substrate-binding positions include E21, Y53, and I72–E73. Catalysis depends on K99, which acts as the Proton donor/acceptor.

It belongs to the DHNA family.

The catalysed reaction is 7,8-dihydroneopterin = 6-hydroxymethyl-7,8-dihydropterin + glycolaldehyde. It functions in the pathway cofactor biosynthesis; tetrahydrofolate biosynthesis; 2-amino-4-hydroxy-6-hydroxymethyl-7,8-dihydropteridine diphosphate from 7,8-dihydroneopterin triphosphate: step 3/4. In terms of biological role, catalyzes the conversion of 7,8-dihydroneopterin to 6-hydroxymethyl-7,8-dihydropterin. This Streptococcus pyogenes serotype M3 (strain ATCC BAA-595 / MGAS315) protein is Dihydroneopterin aldolase (folB).